Reading from the N-terminus, the 203-residue chain is NAD(P)H dehydrogenase (quinone) (203 aa).

The 192-residue stretch at 3–194 folds into the Flavodoxin-like domain; that stretch reads VLIAYYSMYG…AAARYQGKHV (192 aa). FMN is bound by residues 9–14 and 82–84; these read SMYGHI and TRF. An NAD(+)-binding site is contributed by tyrosine 11. Tryptophan 102 lines the substrate pocket. FMN contacts are provided by residues 117–123 and histidine 138; that span reads SSATQHG.

It belongs to the WrbA family. FMN is required as a cofactor.

It catalyses the reaction a quinone + NADH + H(+) = a quinol + NAD(+). It carries out the reaction a quinone + NADPH + H(+) = a quinol + NADP(+). In Geotalea uraniireducens (strain Rf4) (Geobacter uraniireducens), this protein is NAD(P)H dehydrogenase (quinone).